Here is a 291-residue protein sequence, read N- to C-terminus: ATP synthase gamma chain (291 aa).

The protein belongs to the ATPase gamma chain family. In terms of assembly, F-type ATPases have 2 components, CF(1) - the catalytic core - and CF(0) - the membrane proton channel. CF(1) has five subunits: alpha(3), beta(3), gamma(1), delta(1), epsilon(1). CF(0) has three main subunits: a, b and c.

The protein resides in the cell inner membrane. In terms of biological role, produces ATP from ADP in the presence of a proton gradient across the membrane. The gamma chain is believed to be important in regulating ATPase activity and the flow of protons through the CF(0) complex. This Neisseria meningitidis serogroup C (strain 053442) protein is ATP synthase gamma chain.